Reading from the N-terminus, the 711-residue chain is Polyribonucleotide nucleotidyltransferase (711 aa).

Mg(2+) contacts are provided by D486 and D492. Positions P553 to I612 constitute a KH domain. Residues G622–K690 form the S1 motif domain. Positions I689–E711 are disordered. Residues E694–E711 show a composition bias toward low complexity.

It belongs to the polyribonucleotide nucleotidyltransferase family. As to quaternary structure, component of the RNA degradosome, which is a multiprotein complex involved in RNA processing and mRNA degradation. Mg(2+) serves as cofactor.

The protein localises to the cytoplasm. The enzyme catalyses RNA(n+1) + phosphate = RNA(n) + a ribonucleoside 5'-diphosphate. In terms of biological role, involved in mRNA degradation. Catalyzes the phosphorolysis of single-stranded polyribonucleotides processively in the 3'- to 5'-direction. The polypeptide is Polyribonucleotide nucleotidyltransferase (Escherichia coli O8 (strain IAI1)).